The primary structure comprises 213 residues: Large ribosomal subunit protein uL1 (213 aa).

It belongs to the universal ribosomal protein uL1 family. Part of the 50S ribosomal subunit.

Binds directly to 23S rRNA. Probably involved in E site tRNA release. Functionally, protein L1 is also a translational repressor protein, it controls the translation of its operon by binding to its mRNA. The polypeptide is Large ribosomal subunit protein uL1 (Methanococcus maripaludis (strain DSM 14266 / JCM 13030 / NBRC 101832 / S2 / LL)).